The primary structure comprises 381 residues: Cobalt-precorrin-5B C(1)-methyltransferase (381 aa).

Belongs to the CbiD family.

The enzyme catalyses Co-precorrin-5B + S-adenosyl-L-methionine = Co-precorrin-6A + S-adenosyl-L-homocysteine. It participates in cofactor biosynthesis; adenosylcobalamin biosynthesis; cob(II)yrinate a,c-diamide from sirohydrochlorin (anaerobic route): step 6/10. In terms of biological role, catalyzes the methylation of C-1 in cobalt-precorrin-5B to form cobalt-precorrin-6A. This chain is Cobalt-precorrin-5B C(1)-methyltransferase, found in Methylococcus capsulatus (strain ATCC 33009 / NCIMB 11132 / Bath).